We begin with the raw amino-acid sequence, 696 residues long: Two-component response regulator ORR22 (696 aa).

The 116-residue stretch at 27–142 (RVLAVDDDPV…ELRNIWQHVV (116 aa)) folds into the Response regulatory domain. Position 78 is a 4-aspartylphosphate (aspartate 78). A disordered region spans residues 154-214 (LDFSKECNKP…DYQENDEPSA (61 aa)). The segment covering 176–185 (TCGSSDQNGR) has biased composition (polar residues). The span at 195 to 211 (GEDDDEGDDNDYQENDE) shows a compositional bias: acidic residues. The segment at residues 214 to 273 (AAKKPRVVWSVELHRKFVAAVNQLGIDKAVPKRILELMNVEKLTRENVASHLQKYRLYLK) is a DNA-binding region (myb-like GARP).

This sequence belongs to the ARR family. Type-B subfamily. Post-translationally, two-component system major event consists of a His-to-Asp phosphorelay between a sensor histidine kinase (HK) and a response regulator (RR). In plants, the His-to-Asp phosphorelay involves an additional intermediate named Histidine-containing phosphotransfer protein (HPt). This multistep phosphorelay consists of a His-Asp-His-Asp sequential transfer of a phosphate group between first a His and an Asp of the HK protein, followed by the transfer to a conserved His of the HPt protein and finally the transfer to an Asp in the receiver domain of the RR protein.

Its subcellular location is the nucleus. Transcriptional activator that binds specific DNA sequence. Functions as a response regulator involved in His-to-Asp phosphorelay signal transduction system. Phosphorylation of the Asp residue in the receiver domain activates the ability of the protein to promote the transcription of target genes. May directly activate some type-A response regulators in response to cytokinins. The chain is Two-component response regulator ORR22 from Oryza sativa subsp. indica (Rice).